A 212-amino-acid chain; its full sequence is ATP phosphoribosyltransferase (212 aa).

This sequence belongs to the ATP phosphoribosyltransferase family. Short subfamily. As to quaternary structure, heteromultimer composed of HisG and HisZ subunits.

Its subcellular location is the cytoplasm. It carries out the reaction 1-(5-phospho-beta-D-ribosyl)-ATP + diphosphate = 5-phospho-alpha-D-ribose 1-diphosphate + ATP. Its pathway is amino-acid biosynthesis; L-histidine biosynthesis; L-histidine from 5-phospho-alpha-D-ribose 1-diphosphate: step 1/9. Functionally, catalyzes the condensation of ATP and 5-phosphoribose 1-diphosphate to form N'-(5'-phosphoribosyl)-ATP (PR-ATP). Has a crucial role in the pathway because the rate of histidine biosynthesis seems to be controlled primarily by regulation of HisG enzymatic activity. The polypeptide is ATP phosphoribosyltransferase (Citrifermentans bemidjiense (strain ATCC BAA-1014 / DSM 16622 / JCM 12645 / Bem) (Geobacter bemidjiensis)).